The chain runs to 1247 residues: SAM and SH3 domain-containing protein 1 (1247 aa).

The disordered stretch occupies residues 1–39 (MEDAGAAGPGPEPEPEPEPEPEPAPEPEPEPKPGAGTSE). Positions 13-28 (PEPEPEPEPEPAPEPE) are enriched in acidic residues. Ser-90 carries the post-translational modification Phosphoserine. Disordered stretches follow at residues 126–145 (VERK…VGKG), 221–257 (AALD…ESVK), and 316–344 (FFDG…LDTW). At Ser-248 the chain carries Phosphoserine. Residues 331-343 (SLTTSPSSSSLDT) show a composition bias toward low complexity. Position 407 is a phosphoserine (Ser-407). Residues 449 to 573 (SLGKKVKSVK…DFTPSPYDTD (125 aa)) are disordered. 2 stretches are compositionally biased toward low complexity: residues 468 to 484 (KYSS…DGMP) and 505 to 523 (GGSV…SMSG). The span at 524-536 (QTVSTTDSSTSNR) shows a compositional bias: polar residues. The SH3 domain maps to 554-615 (PFCGRARVHT…KFIYVDVLSE (62 aa)). Ser-614 carries the phosphoserine modification. Disordered regions lie at residues 616 to 639 (DEEK…KSVE) and 713 to 810 (DSQG…LNKN). Basic residues predominate over residues 622–631 (RPTRRRRKGR). An SAM 1 domain is found at 633–697 (PQPKSVEDLL…LTAVELLQEY (65 aa)). The span at 746-765 (SAKSSTEPSLKSFSRNQLGN) shows a compositional bias: polar residues. Ser-821 and Ser-839 each carry phosphoserine. Disordered stretches follow at residues 846–884 (EPGA…PLEQ), 903–946 (PQKL…LART), and 971–1065 (DAEQ…SELP). Residues 852-860 (DVPTEVTEP) are required for interaction with TRAF6. Position 858 is a phosphothreonine (Thr-858). Residues 1050–1060 (GSPPSTRPPPW) are compositionally biased toward pro residues. Positions 1177–1241 (GCISSVSDWL…LSAARLFKLP (65 aa)) constitute an SAM 2 domain.

In terms of assembly, interacts with GNAS. Interacts with IQGAP1. Interacts with TRAF6 (via C-terminus); the interaction is LPS-dependent. Interacts with MAP3K7, CHUK and IKBKB. Expressed ubiquitously, with highest levels in lung, placenta, spleen and thymus. Down-regulated in the majority (74%) of breast tumors in comparison with corresponding normal breast epithelial tissues. Expressed in the epidermis, epidermal keratinocytes, dermal fibroblasts and melanocytes.

Its subcellular location is the cytoplasm. Is a positive regulator of NF-kappa-B signaling downstream of TLR4 activation. It acts as a scaffold molecule to assemble a molecular complex that includes TRAF6, MAP3K7, CHUK and IKBKB, thereby facilitating NF-kappa-B signaling activation. Regulates TRAF6 and MAP3K7 ubiquitination. Involved in the regulation of cell mobility. Regulates lipolysaccharide (LPS)-induced endothelial cell migration. Is involved in the regulation of skin pigmentation through the control of melanocyte migration in the epidermis. In Homo sapiens (Human), this protein is SAM and SH3 domain-containing protein 1 (SASH1).